Here is a 101-residue protein sequence, read N- to C-terminus: Interleukin-8 (101 aa).

Residues 1–22 (MNSKLAVALLATFLLSLTLCEA) form the signal peptide. R27 is subject to Citrulline. Cystine bridges form between C34/C61 and C36/C77.

Belongs to the intercrine alpha (chemokine CxC) family. In terms of assembly, homodimer. Interacts with TNFAIP6 (via Link domain); this interaction interferes with chemokine binding to glycosaminoglycans. Post-translationally, citrullination at Arg-27 prevents proteolysis, and dampens tissue inflammation, it also enhances leukocytosis, possibly through impaired chemokine clearance from the blood circulation.

It is found in the secreted. Functionally, chemotactic factor that mediates inflammatory response by attracting neutrophils, basophils, and T-cells to clear pathogens and protect the host from infection. Also plays an important role in neutrophil activation. Released in response to an inflammatory stimulus, exerts its effect by binding to the G-protein-coupled receptors CXCR1 and CXCR2, primarily found in neutrophils, monocytes and endothelial cells. G-protein heterotrimer (alpha, beta, gamma subunits) constitutively binds to CXCR1/CXCR2 receptor and activation by IL8 leads to beta and gamma subunits release from Galpha (GNAI2 in neutrophils) and activation of several downstream signaling pathways including PI3K and MAPK pathways. The protein is Interleukin-8 (CXCL8) of Oryctolagus cuniculus (Rabbit).